We begin with the raw amino-acid sequence, 239 residues long: Interleukin-27 subunit alpha (239 aa).

Residues 1-28 (MGQMADDLGWRLSLLLLSLLLARAGVWG) form the signal peptide. N-linked (GlcNAc...) asparagine glycosylation is present at Asn89. The segment at 167–186 (EEENEAGRELLPGAPGGPSK) is disordered.

Belongs to the IL-6 superfamily. In terms of assembly, heterodimer with EBI3; not disulfide-linked. This heterodimer is known as interleukin IL-27. O-glycosylated.

The protein localises to the secreted. In terms of biological role, associates with EBI3 to form the IL-27 interleukin, a heterodimeric cytokine which functions in innate immunity. Cytokine with pro- and anti-inflammatory properties, that can regulate T-helper cell development, suppress T-cell proliferation, stimulate cytotoxic T-cell activity, induce isotype switching in B-cells, and that has diverse effects on innate immune cells. Among its target cells are CD4 T-helper cells which can differentiate in type 1 effector cells (TH1), type 2 effector cells (TH2) and IL17 producing helper T-cells (TH17). It drives rapid clonal expansion of naive but not memory CD4 T-cells. It also strongly synergizes with IL-12 to trigger interferon-gamma/IFN-gamma production of naive CD4 T-cells, binds to the cytokine receptor WSX-1/TCCR which appears to be required but not sufficient for IL-27-mediated signal transduction. IL-27 potentiate the early phase of TH1 response and suppress TH2 and TH17 differentiation. It induces the differentiation of TH1 cells via two distinct pathways, p38 MAPK/TBX21- and ICAM1/ITGAL/ERK-dependent pathways. It also induces STAT1, STAT3, STAT4 and STAT5 phosphorylation and activates TBX21/T-Bet via STAT1 with resulting IL12RB2 up-regulation, an event crucial to TH1 cell commitment. It suppresses the expression of GATA3, the inhibitor TH1 cells development. In CD8 T-cells, it activates STATs as well as GZMB. IL-27 reveals to be a potent inhibitor of TH17 cell development and of IL-17 production. Indeed IL27 alone is also able to inhibit the production of IL17 by CD4 and CD8 T-cells. While IL-27 suppressed the development of pro-inflammatory Th17 cells via STAT1, it inhibits the development of anti-inflammatory inducible regulatory T-cells, iTreg, independently of STAT1. IL-27 also has an effect on cytokine production, it suppresses pro-inflammatory cytokine production such as IL2, IL4, IL5 and IL6 and activates suppressors of cytokine signaling such as SOCS1 and SOCS3. Apart from suppression of cytokine production, IL-27 also antagonizes the effects of some cytokines such as IL6 through direct effects on T-cells. Another important role of IL-27 is its antitumor activity as well as its antiangiogenic activity with activation of production of antiangiogenic chemokines such as IP-10/CXCL10 and MIG/CXCL9. In vein endothelial cells, it induces IRF1/interferon regulatory factor 1 and increase the expression of MHC class II transactivator/CIITA with resulting up-regulation of major histocompatibility complex class II. In Sus scrofa (Pig), this protein is Interleukin-27 subunit alpha (IL27).